A 98-amino-acid chain; its full sequence is uncharacterized protein (98 aa).

Positions 19-31 are enriched in basic residues; the sequence is RRMSKRSKNKAKK. The disordered stretch occupies residues 19–47; sequence RRMSKRSKNKAKKERVPVEDRPPTPMPTS.

This sequence belongs to the lymphocryptovirus BNLF2B family.

This is an uncharacterized protein from Epstein-Barr virus (strain AG876) (HHV-4).